Reading from the N-terminus, the 947-residue chain is MTPLSSPLSQYWQTVVERLPEGFTETSLSVQAKSVLTFSDFALDSVIAHPEWLAELESASPQADEWRHYAGWLQEALAGVCDDASLMRELRLFRRRIMVRIAWAQTLSLVDDETILQQLSHLAETLIVGARDWLYAACCREWGTPCNPQGVPQPLLILGMGKLGGGELNFSSDIDLIFAWPEHGETRGGRRELDNAQFFTRLGQRLIKALDQPTMDGFVYRVDMRLRPFGDSGPLVLSFAALEDYYQEQGRDWERYAMVKARLMGDNDDAWSRELRAMLRPFVFRRYIDFSVIQSLRNMKGMIAREVRRRGLKDNIKLGAGGIREIEFIVQVFQLIRGGREPSLQSRSLLPTLDAIAALHLLPENDVAQLRVAYLFLRRLENLLQSINDEQTQTLPADDLNRARLAWGMKAENWPQLVGELTDHMANVRRVFNELIGDDEADTPQEEERSEPWREVWQDALQEDDSTPVLAHLADEDRRQVLTLIADFRKELDKRPIGPRGRQVLDQLMPHLLADVCSREDAAVTLSRITPLLAGIVTRTTYLELLSEFPGALKHLIMLCAASPMIASQLARYPLLLDELLDPGTLYQPTATDAYRDELRQYLLRVPEEDEEQQLEALRQFKQAQLLRIAAADIAGTLPVMKVSDHLTWLAEAMIDAVVQQAWTQMVARYGQPAHLDERQGRGFAVVGYGKLGGWELGYSSDLDLIFLHDCPMDVMTNGEREIDGRQFYLRLAQRIMHLFSTRTSSGILYEVDARLRPSGAAGMLVTSADAFADYQQHEAWTWEHQALVRARVVYGDPQLTSQFDTVRRTIMTTARDGKTLQTEVREMREKMRAHLGNKHRDRFDIKADEGGITDIEFIAQYLVLRYAHEKPKLTRWSDNVRILELLAQNGIMDEHEAQALTVAYTTLRDELHHLALQELPGHVAQTCFSKERALVQASWRKWLVAV.

An adenylyl removase region spans residues 1 to 440 (MTPLSSPLSQ…VFNELIGDDE (440 aa)). Positions 450–947 (SEPWREVWQD…ASWRKWLVAV (498 aa)) are adenylyl transferase.

It belongs to the GlnE family. Mg(2+) serves as cofactor.

It catalyses the reaction [glutamine synthetase]-O(4)-(5'-adenylyl)-L-tyrosine + phosphate = [glutamine synthetase]-L-tyrosine + ADP. The catalysed reaction is [glutamine synthetase]-L-tyrosine + ATP = [glutamine synthetase]-O(4)-(5'-adenylyl)-L-tyrosine + diphosphate. Involved in the regulation of glutamine synthetase GlnA, a key enzyme in the process to assimilate ammonia. When cellular nitrogen levels are high, the C-terminal adenylyl transferase (AT) inactivates GlnA by covalent transfer of an adenylyl group from ATP to specific tyrosine residue of GlnA, thus reducing its activity. Conversely, when nitrogen levels are low, the N-terminal adenylyl removase (AR) activates GlnA by removing the adenylyl group by phosphorolysis, increasing its activity. The regulatory region of GlnE binds the signal transduction protein PII (GlnB) which indicates the nitrogen status of the cell. This chain is Bifunctional glutamine synthetase adenylyltransferase/adenylyl-removing enzyme, found in Salmonella agona (strain SL483).